A 179-amino-acid chain; its full sequence is Protein YjaZ (179 aa).

The sequence is that of Protein YjaZ from Escherichia coli (strain K12).